A 485-amino-acid polypeptide reads, in one-letter code: Regulatory protein ViaA (485 aa).

The protein belongs to the ViaA family. As to quaternary structure, homodimer. Interacts with RavA.

It localises to the cytoplasm. Component of the RavA-ViaA chaperone complex, which may act on the membrane to optimize the function of some of the respiratory chains. ViaA stimulates the ATPase activity of RavA. The protein is Regulatory protein ViaA of Proteus mirabilis (strain HI4320).